The sequence spans 479 residues: ATP synthase subunit beta, chloroplastic (479 aa).

Residue 156–163 (GGAGVGKT) participates in ATP binding.

Belongs to the ATPase alpha/beta chains family. F-type ATPases have 2 components, CF(1) - the catalytic core - and CF(0) - the membrane proton channel. CF(1) has five subunits: alpha(3), beta(3), gamma(1), delta(1), epsilon(1). CF(0) has four main subunits: a(1), b(1), b'(1) and c(9-12).

Its subcellular location is the plastid. It localises to the chloroplast thylakoid membrane. It catalyses the reaction ATP + H2O + 4 H(+)(in) = ADP + phosphate + 5 H(+)(out). Its function is as follows. Produces ATP from ADP in the presence of a proton gradient across the membrane. The catalytic sites are hosted primarily by the beta subunits. The protein is ATP synthase subunit beta, chloroplastic of Trichomanes davallioides (Kilau fern).